The sequence spans 93 residues: Acylphosphatase (93 aa).

An Acylphosphatase-like domain is found at 6-93; it reads RAHILVSGEV…GDLGPFSVRH (88 aa). Residues Arg-21 and Asn-39 contribute to the active site.

This sequence belongs to the acylphosphatase family.

It carries out the reaction an acyl phosphate + H2O = a carboxylate + phosphate + H(+). The polypeptide is Acylphosphatase (acyP) (Anaeromyxobacter sp. (strain Fw109-5)).